We begin with the raw amino-acid sequence, 203 residues long: Enterotoxin-like toxin X (203 aa).

A sialic acid-binding motif region spans residues 164–180 (YTLESHKELQKNRENVE).

This sequence belongs to the staphylococcal/streptococcal toxin family.

It is found in the secreted. Its function is as follows. Plays a role in the inhibition of the host innate immune system. Inhibits phagocytosis and killing by human neutrophils by interacting with multiple neutrophil surface glycoproteins in a sialic acid-dependent manner. This is Enterotoxin-like toxin X from Staphylococcus aureus.